An 881-amino-acid chain; its full sequence is NACHT, LRR and PYD domains-containing protein 6 (881 aa).

The Pyrin domain occupies 1–129 (MDAAGASCSS…EHVLRQHAKV (129 aa)). Residue S104 is modified to Phosphoserine. Residues 154 to 175 (AGEDELLGTSGEPEPERARRSD) are disordered. The 317-residue stretch at 194–510 (LTVVLQGPAG…EFLAALSYLL (317 aa)) folds into the NACHT domain. 200 to 207 (GPAGIGKT) is a binding site for ATP. Residues 459-484 (EKDLERLKLQGSQVQTMFLSKKELPG) form an LRR 1 repeat. A disordered region spans residues 579–611 (QSQPKVATVGAEKKDELKDEEAEEEEEEEEEEE). Residues 596-611 (KDEEAEEEEEEEEEEE) are compositionally biased toward acidic residues. LRR repeat units lie at residues 637 to 660 (LSSLPEMVLERVRLTRMDLEVLSY), 749 to 772 (APSLRELGLLQNRLTEAGLRLLSQ), and 839 to 863 (TLSLTSVELTENPLRELQAVKTLKP).

This sequence belongs to the NLRP family. As to quaternary structure, homomultimer; forms the NLRP6 inflammasome polymeric complex, a filament composed of homopolymers in response to pathogens and other damage-associated signals. The core of NLRP6 inflammasomes consists of a signal sensor component (NLRP6), an adapter (PYCARD/ASC), which recruits effector pro-inflammatory caspases (CASP1 and CASP4). Interacts (via pyrin domain) with PYCARD/ASC (via pyrin domain); interaction takes place following NLRP6 activation and formation of liquid-liquid phase separation (LLPS), initiating nucleation which greatly enhances further addition of soluble PYCARD/ASC molecules to the speck in a prion-like polymerization process. Clustered PYCARD/ASC nucleates the formation of CASP1 (or possibly CASP4) filaments through the interaction of their respective CARD domains, acting as a platform for CASP1 polymerization. CASP1 filament formation increases local enzyme concentration, resulting in trans-autocleavage and activation. Active CASP1 then processes IL1B and IL18 precursors, leading to the release of mature cytokines in the extracellular milieu and inflammatory response. Interacts with DHX15. Polyubiquitinated with 'Lys-63'-linked chains, promoting the interaction with PYCARD/ASC and formation of the NLRP6 inflammasome. Deubiquitination by CYLD decreases the interaction with PYCARD/ASC. Detected in several tissues. Expressed in renal epithelial cells in medullary thick ascending limb of Henle, as well as in salivary gland apical epithelium (at protein level). Isoform 1 is widely expressed. Isoform 2 is primarily expressed in kidney (at protein level).

It is found in the cytoplasm. It localises to the inflammasome. The protein localises to the cell membrane. Its subcellular location is the nucleus membrane. In terms of biological role, acts as the sensor component of the NLRP6 inflammasome, which mediates inflammasome activation in response to various pathogen-associated signals, leading to maturation and secretion of IL1B and IL18. Inflammasomes are supramolecular complexes that assemble in the cytosol in response to pathogens and other damage-associated signals and play critical roles in innate immunity and inflammation. Acts as a recognition receptor (PRR): recognizes and binds specific pathogens and other damage-associated signals, such as lipoteichoic acid (LTA), a cell-wall component of Gram-positive bacteria, or double stranded RNA (dsRNA). May also recognize and bind lipopolysaccharide (LPS), a major component of the outer membrane of Gram-negative bacteria; however, LPS is probably not a major activator of the NLRP6 inflammasome. Following LTA- or dsRNA-binding, NLRP6 undergoes liquid-liquid phase separation (LLPS), enhancing multivalent interactions, an essential step for the formation of the NLRP6 inflammasome polymeric complex. The NLRP6 inflammasome acts by promoting recruitment of effector pro-inflammatory caspases (CASP1 and/or CASP4) that catalyze maturation and secretion of IL1B and IL18 in the extracellular milieu. The NLRP6 inflammasome plays a central role in the maintenance of epithelial integrity and host defense against microbial infections in the intestine. Required to restrict infection against Gram-positive bacteria by recognizing lipoteichoic acid (LTA), leading to recruitment of CASP4 and CASP1, and subsequent maturation and secretion of IL1B and IL18. Involved in intestinal antiviral innate immunity together with DHX15: recognizes and binds viral dsRNA to restrict infection by enteric viruses through the interferon pathway and GSDMD-dependent release of IL18. Required to prevent infection by the apicomplexan parasite Cryptosporidium in enterocytes by promoting GSDMD-dependent release of IL18. The NLRP6 inflammasome may also regulate the gut microbiota composition by acting as a sensor of microbiota-associated metabolites to form a PYCARD/ASC-dependent inflammasome for downstream IL18 release and secretion of antimicrobial peptides. Essential for gut mucosal self-renewal and proliferation. Regulate mucus secretion in an inflammasome- and autophagy-dependent manner to prevent invasion by enteric bacteria,. During systemic bacterial infections, the NLRP6 inflammasome negatively regulates neutrophil recruitment and neutrophil extracellular traps (NETs) formation. May promote peripheral nerve recovery following injury via an inflammasome-independent mechanism. The polypeptide is NACHT, LRR and PYD domains-containing protein 6 (Rattus norvegicus (Rat)).